Consider the following 142-residue polypeptide: Transcriptional regulator MraZ (142 aa).

2 SpoVT-AbrB domains span residues 5 to 47 (THTP…PTPE) and 76 to 119 (AHDE…DRVA).

Belongs to the MraZ family. Forms oligomers.

The protein localises to the cytoplasm. The protein resides in the nucleoid. The polypeptide is Transcriptional regulator MraZ (Salinispora tropica (strain ATCC BAA-916 / DSM 44818 / JCM 13857 / NBRC 105044 / CNB-440)).